A 238-amino-acid polypeptide reads, in one-letter code: GATA transcription factor 7 (238 aa).

Positions 24–64 are disordered; sequence TSLESSSSQRKEDEQEREKFKSFSDQSTRLSPPEDLLSFPG. Residues 32 to 45 are compositionally biased toward basic and acidic residues; it reads QRKEDEQEREKFKS. The Nuclear localization signal signature appears at 112-119; that stretch reads KPRSKRRR. The segment at 160 to 214 adopts a GATA-type zinc-finger fold; the sequence is QQLRRCCSHCGVQKTPQWRMGPLGAKTLCNACGVRFKSGRLLPEYRPACSPTFTN.

This sequence belongs to the type IV zinc-finger family. Class A subfamily.

The protein resides in the nucleus. In terms of biological role, transcriptional activator that specifically binds 5'-GATA-3' or 5'-GAT-3' motifs within gene promoters. May be involved in the regulation of some light-responsive genes. This Arabidopsis thaliana (Mouse-ear cress) protein is GATA transcription factor 7 (GATA7).